The primary structure comprises 380 residues: Chorismate synthase (380 aa).

Arg-47 lines the NADP(+) pocket. FMN contacts are provided by residues 124–126 (RSS), Gly-288, 303–307 (KPTST), and Arg-329.

It belongs to the chorismate synthase family. Homotetramer. Requires FMNH2 as cofactor.

It carries out the reaction 5-O-(1-carboxyvinyl)-3-phosphoshikimate = chorismate + phosphate. Its pathway is metabolic intermediate biosynthesis; chorismate biosynthesis; chorismate from D-erythrose 4-phosphate and phosphoenolpyruvate: step 7/7. In terms of biological role, catalyzes the anti-1,4-elimination of the C-3 phosphate and the C-6 proR hydrogen from 5-enolpyruvylshikimate-3-phosphate (EPSP) to yield chorismate, which is the branch point compound that serves as the starting substrate for the three terminal pathways of aromatic amino acid biosynthesis. This reaction introduces a second double bond into the aromatic ring system. The chain is Chorismate synthase from Leptospira borgpetersenii serovar Hardjo-bovis (strain JB197).